Here is a 1614-residue protein sequence, read N- to C-terminus: Low-density lipoprotein receptor-related protein 5 (1614 aa).

A signal peptide spans 1–30 (METAPTRAPPPPPPPLLLLVLYCSLVPAAA). Residues 31–287 (SPLLLFANRR…YSPMDIQVLS (257 aa)) form a beta-propeller 1 region. At 31 to 1383 (SPLLLFANRR…PPSDDIPAHS (1353 aa)) the chain is on the extracellular side. LDL-receptor class B repeat units follow at residues 74–118 (GAVY…DWVG), 119–161 (KKLY…DPAH), 162–205 (GYMY…DLEE), 206–246 (QKLY…TLSG), and 247–289 (DTLY…LSQE). N-linked (GlcNAc...) asparagine glycosylation is found at asparagine 92 and asparagine 137. In terms of domain architecture, EGF-like 1 spans 294 to 336 (FHTPCEEDNGGCSHLCLLSPREPFYSCACPTGVQLQDNGKTCK). Cystine bridges form between cysteine 298–cysteine 309, cysteine 305–cysteine 320, and cysteine 322–cysteine 335. Positions 340 to 601 (EEVLLLARRT…AVNVAKVVGT (262 aa)) are beta-propeller 2. 5 LDL-receptor class B repeats span residues 384–426 (GYVY…DWVA), 427–469 (RNLY…HPVM), 470–513 (GLMY…DLQE), 514–556 (GKLY…LGDF), and 557–599 (IYWT…AKVV). N-linked (GlcNAc...) asparagine glycosylation is found at asparagine 445 and asparagine 498. One can recognise an EGF-like 2 domain in the interval 600–640 (GTNPCADGNGGCSHLCFFTPRATKCGCPIGLELLSDMKTCI). Disulfide bonds link cysteine 604–cysteine 615, cysteine 611–cysteine 624, and cysteine 626–cysteine 639. Positions 643 to 902 (EAFLVFTSRA…VFHSSRQDGL (260 aa)) are beta-propeller 3. 5 LDL-receptor class B repeats span residues 686–728 (NHIY…DWMG), 729–771 (KNLY…DPTK), 772–814 (GYIY…DYAD), 815–854 (QRLY…TQYS), and 855–897 (DYIY…FHSS). Residue asparagine 704 is glycosylated (N-linked (GlcNAc...) asparagine). Residue asparagine 877 is glycosylated (N-linked (GlcNAc...) asparagine). The EGF-like 3 domain occupies 901–941 (GLNDCVHSNGQCGQLCLAIPGGHRCGCASHYTLDPSSRNCS). Disulfide bonds link cysteine 905–cysteine 916, cysteine 912–cysteine 925, and cysteine 927–cysteine 940. Residues 944-1211 (STFLLFSQKF…AVEEVSLEEF (268 aa)) form a beta-propeller 4 region. LDL-receptor class B repeat units follow at residues 988–1034 (KFIY…DIYS), 1035–1077 (RTLF…NAER), 1078–1122 (GYMY…DNAL), 1123–1164 (GKLF…VLGR), and 1165–1206 (HLYW…VEEV). The segment at 1002 to 1025 (AKDDGTQPSMLTSPSQSLSPDRQP) is disordered. Polar residues predominate over residues 1007–1021 (TQPSMLTSPSQSLSP). The 42-residue stretch at 1212–1253 (SAHPCARDNGGCSHICIAKGDGTPRCSCPVHLVLLQNLLTCG) folds into the EGF-like 4 domain. 12 disulfide bridges follow: cysteine 1216–cysteine 1227, cysteine 1223–cysteine 1237, cysteine 1239–cysteine 1252, cysteine 1258–cysteine 1272, cysteine 1265–cysteine 1285, cysteine 1279–cysteine 1294, cysteine 1297–cysteine 1309, cysteine 1304–cysteine 1322, cysteine 1316–cysteine 1331, cysteine 1335–cysteine 1347, cysteine 1342–cysteine 1360, and cysteine 1354–cysteine 1369. LDL-receptor class A domains are found at residues 1257–1295 (TCSP…EGCP), 1296–1332 (VCSA…ANCD), and 1334–1370 (VCLP…LMCE). Residues 1384–1406 (SAIGPVIGIILSLFVMGGVYFVC) traverse the membrane as a helical segment. The Cytoplasmic portion of the chain corresponds to 1407–1614 (QRVMCQRYTG…PPPSPCTDSS (208 aa)). The segment at 1474–1498 (RNHVTGASSSSSSSTKATLYPPILN) is disordered. The PPPSP motif A signature appears at 1499-1505 (PPPSPAT). A PPPSP motif B motif is present at residues 1537–1544 (PPTTPCST). The tract at residues 1567–1599 (SDSDPYPPPPTPHSQYLSAEDSCPPSPGTERSY) is disordered. Residues 1573–1580 (PPPPTPHS) carry the PPPSP motif C motif. The short motif at 1590–1595 (PPSPGT) is the PPPSP motif D element. The PPPSP motif E signature appears at 1604 to 1611 (PPPPSPCT).

The protein belongs to the LDLR family. As to quaternary structure, homodimer; disulfide-linked. Forms phosphorylated oligomer aggregates on Wnt-signaling. Component of a WNT-signaling complex that contains a WNT protein, a FZD protein and LRP5 or LRP6. Interacts with FZD8; the interaction is formed on WNT-binding and signaling. Interacts (via the phosphorylated PPPSP motif domains) with AXIN1; the interaction prevents inhibition of beta-catenin phosphorylation and signaling and is enhanced in the presence of GSK3B and WNT1 or WNT3A. Interacts (via beta-propeller regions 3 and 4) with DKK1; the interaction, enhanced by MESD and/or KREMEN, inhibits beta-catenin signaling by preventing GSK3-mediated phosphorylation of the PPPSP motifs and subsequent, AXIN1 binding. Interacts with CSNK1E. Interacts with SOST; the interaction antagonizes canonical Wnt signaling. Interacts with APCDD1. Interacts with MESD; the interaction prevents the formation of LRP5 aggregates, targets LRP5 to the plasma membrane and, when complexed with KREMEN2, increases DKK1 binding. Interacts with CAPRIN2. Post-translationally, phosphorylation of cytoplasmic PPPSP motifs regulates the signal transduction of the Wnt signaling pathway through acting as a docking site for AXIN1. As to expression, widely expressed, with the highest expression levels in liver, heart, and lung and the lowest levels in brain and spleen.

It localises to the membrane. The protein resides in the endoplasmic reticulum. Its function is as follows. Acts as a coreceptor with members of the frizzled family of seven-transmembrane spanning receptors to transduce signal by Wnt proteins. Activates the canonical Wnt signaling pathway that controls cell fate determination and self-renewal during embryonic development and adult tissue regeneration. In particular, may play an important role in the development of the posterior patterning of the epiblast during gastrulation. During bone development, regulates osteoblast proliferation and differentiation thus determining bone mass. Mechanistically, the formation of the signaling complex between Wnt ligand, frizzled receptor and LRP5 coreceptor promotes the recruitment of AXIN1 to LRP5, stabilizing beta-catenin/CTNNB1 and activating TCF/LEF-mediated transcriptional programs. Acts as a coreceptor for non-Wnt proteins, such as norrin/NDP. Binding of norrin/NDP to frizzled 4/FZD4-LRP5 receptor complex triggers beta-catenin/CTNNB1-dependent signaling known to be required for retinal vascular development. Plays a role in controlling postnatal vascular regression in retina via macrophage-induced endothelial cell apoptosis. The protein is Low-density lipoprotein receptor-related protein 5 of Mus musculus (Mouse).